Here is a 489-residue protein sequence, read N- to C-terminus: WD repeat-containing protein JIP5 (489 aa).

Residues 4 to 45 (PLSSDALDLCFHPAAETNLLAVGLISGKIQLINYDDYLSSPS) form a WD 1 repeat. A disordered region spans residues 46 to 66 (SSRTPLAPPSKKSKPSTISSA). One copy of the WD 2 repeat lies at 124 to 163 (EVHDAAPSRVLPVDESLVVTGDDDGVVRLWDVRKGGGKGI). The disordered stretch occupies residues 192-246 (SIKEAKKSKTQLKKQRRRARQAERLKEHDKEKREQNASDTEASEPDSEDDAAIKV). Over residues 199-210 (SKTQLKKQRRRA) the composition is skewed to basic residues. The segment covering 211 to 227 (RQAERLKEHDKEKREQN) has biased composition (basic and acidic residues). Over residues 232 to 241 (EASEPDSEDD) the composition is skewed to acidic residues. WD repeat units lie at residues 279–318 (DQED…LDHV) and 323–363 (GHPA…GVIA). Positions 417–489 (IVGLAEDDSD…AGKGGFFSDL (73 aa)) are disordered. 2 stretches are compositionally biased toward acidic residues: residues 421–440 (AEDD…DDDD) and 449–472 (DGAE…DSED).

It belongs to the WD repeat WDR55 family.

It is found in the nucleus. The protein resides in the nucleolus. In Mycosarcoma maydis (Corn smut fungus), this protein is WD repeat-containing protein JIP5 (JIP5).